Here is a 1700-residue protein sequence, read N- to C-terminus: uncharacterized protein (1700 aa).

A helical membrane pass occupies residues 986-1006; it reads APITQYPVLCYLLYLLSYYLV. Coiled-coil stretches lie at residues 1246-1278 and 1657-1684; these read DQNA…REIK and QDMD…IEGD. The disordered stretch occupies residues 1650 to 1700; sequence DTEPDIMQDMDGEPQEADELEDLKEEAESLDIEGDYFAEEDEDYAQEDFIE. Residues 1651–1700 show a composition bias toward acidic residues; the sequence is TEPDIMQDMDGEPQEADELEDLKEEAESLDIEGDYFAEEDEDYAQEDFIE.

The protein localises to the host membrane. Its subcellular location is the virion. This is an uncharacterized protein from Acanthamoeba polyphaga (Amoeba).